We begin with the raw amino-acid sequence, 447 residues long: Chordin-like protein 1 (447 aa).

A signal peptide spans Met1 to Thr22. 2 VWFC domains span residues Thr30–Pro95 and Lys108–Arg174. Asn113 carries an N-linked (GlcNAc...) asparagine glycan. The Cell attachment site motif lies at Arg174–Asp176. The segment at Ser200 to Arg224 is disordered. Positions Gln253–Pro318 constitute a VWFC 3 domain. The N-linked (GlcNAc...) asparagine glycan is linked to Asn286.

May be glycosylated. In terms of tissue distribution, expressed in heart, brain, lung, liver, kidney and testis.

Its subcellular location is the secreted. Its function is as follows. Seems to antagonize the function of BMP4 by binding to it and preventing its interaction with receptors. Alters the fate commitment of neural stem cells from gliogenesis to neurogenesis. Contributes to neuronal differentiation of neural stem cells in the brain by preventing the adoption of a glial fate. May play a crucial role in dorsoventral axis formation. Antagonizes the function of BMP7 and may thus play an important role in the embryonic bone formation. Shows no inhibitory effect on the inducing activity of BMP2. Plays a role during anterior segment eye development. The polypeptide is Chordin-like protein 1 (Chrdl1) (Mus musculus (Mouse)).